We begin with the raw amino-acid sequence, 150 residues long: Auxin-binding protein 5 (150 aa).

Positions 1-41 (MVRRRPATGAAQRPQLAAVGRGLLLASVLAAAASSLPVAES) are cleaved as a signal peptide. Positions 98, 100, and 104 each coordinate Zn(2+). A glycan (N-linked (GlcNAc...) asparagine) is linked at asparagine 136. Histidine 147 lines the Zn(2+) pocket.

As to quaternary structure, homodimer.

It localises to the endoplasmic reticulum lumen. In terms of biological role, this is probably a receptor for the plant hormone auxin. The protein is Auxin-binding protein 5 (ABP5) of Zea mays (Maize).